We begin with the raw amino-acid sequence, 438 residues long: GTPase Obg (438 aa).

One can recognise an Obg domain in the interval 1-159 (MAFRDVLNIE…RRVRLELRLI (159 aa)). The 173-residue stretch at 160–332 (ADVGLVGYPN…LRETLFQLLP (173 aa)) folds into the OBG-type G domain. Residues 166 to 173 (GYPNAGKS), 191 to 195 (FTTLS), 219 to 222 (DIPG), 285 to 288 (NKVE), and 313 to 315 (SAK) each bind ATP. S173 and T193 together coordinate Mg(2+). The OCT domain occupies 357–435 (IVFREDAPAK…IGTFRFEYFD (79 aa)).

This sequence belongs to the TRAFAC class OBG-HflX-like GTPase superfamily. OBG GTPase family. As to quaternary structure, monomer. Requires Mg(2+) as cofactor.

The protein resides in the cytoplasm. In terms of biological role, an essential GTPase which binds GTP, GDP and possibly (p)ppGpp with moderate affinity, with high nucleotide exchange rates and a fairly low GTP hydrolysis rate. Plays a role in control of the cell cycle, stress response, ribosome biogenesis and in those bacteria that undergo differentiation, in morphogenesis control. This Deinococcus radiodurans (strain ATCC 13939 / DSM 20539 / JCM 16871 / CCUG 27074 / LMG 4051 / NBRC 15346 / NCIMB 9279 / VKM B-1422 / R1) protein is GTPase Obg.